Reading from the N-terminus, the 226-residue chain is Large ribosomal subunit protein uL3 (226 aa).

This sequence belongs to the universal ribosomal protein uL3 family. In terms of assembly, part of the 50S ribosomal subunit. Forms a cluster with proteins L14 and L19.

In terms of biological role, one of the primary rRNA binding proteins, it binds directly near the 3'-end of the 23S rRNA, where it nucleates assembly of the 50S subunit. In Sulfurihydrogenibium sp. (strain YO3AOP1), this protein is Large ribosomal subunit protein uL3.